A 264-amino-acid polypeptide reads, in one-letter code: Thymidylate synthase (264 aa).

DUMP is bound at residue Arg21. Position 51 (His51) interacts with (6R)-5,10-methylene-5,6,7,8-tetrahydrofolate. Residue 126 to 127 (RR) participates in dUMP binding. The active-site Nucleophile is the Cys146. Residues 166–169 (RSAD), Asn177, and 207–209 (HIY) contribute to the dUMP site. Asp169 serves as a coordination point for (6R)-5,10-methylene-5,6,7,8-tetrahydrofolate. Residue Ser263 coordinates (6R)-5,10-methylene-5,6,7,8-tetrahydrofolate.

This sequence belongs to the thymidylate synthase family. Bacterial-type ThyA subfamily. As to quaternary structure, homodimer.

The protein resides in the cytoplasm. It catalyses the reaction dUMP + (6R)-5,10-methylene-5,6,7,8-tetrahydrofolate = 7,8-dihydrofolate + dTMP. It functions in the pathway pyrimidine metabolism; dTTP biosynthesis. In terms of biological role, catalyzes the reductive methylation of 2'-deoxyuridine-5'-monophosphate (dUMP) to 2'-deoxythymidine-5'-monophosphate (dTMP) while utilizing 5,10-methylenetetrahydrofolate (mTHF) as the methyl donor and reductant in the reaction, yielding dihydrofolate (DHF) as a by-product. This enzymatic reaction provides an intracellular de novo source of dTMP, an essential precursor for DNA biosynthesis. This Exiguobacterium sp. (strain ATCC BAA-1283 / AT1b) protein is Thymidylate synthase.